We begin with the raw amino-acid sequence, 265 residues long: Insulin-like growth factor-binding protein 5 (265 aa).

The signal sequence occupies residues 1 to 21; sequence MEMLLPMCLLLVSLCLGQCQA. Residues 24–104 form the IGFBP N-terminal domain; sequence SFVHCEPCDD…LHGRGVCLNL (81 aa). 6 cysteine pairs are disulfide-bonded: Cys28–Cys54, Cys31–Cys56, Cys39–Cys57, Cys46–Cys60, Cys68–Cys81, and Cys75–Cys101. A compositionally biased stretch (basic and acidic residues) spans 111–121; sequence SKIDRESREED. The interval 111–137 is disordered; it reads SKIDRESREEDPTTSETEDIYQSKHRG. The region spanning 182 to 256 is the Thyroglobulin type-1 domain; it reads MGPCRRQVET…IDYVNGDLQC (75 aa). Cystine bridges form between Cys185/Cys212, Cys223/Cys234, and Cys236/Cys256.

It localises to the secreted. Its function is as follows. IGF-binding proteins prolong the half-life of the IGFs and have been shown to either inhibit or stimulate the growth promoting effects of the IGFs on cell culture. They alter the interaction of IGFs with their cell surface receptors. Promotes anterior neural development by stimulating insulin growth factor (IGF) signaling via IGF receptors. The polypeptide is Insulin-like growth factor-binding protein 5 (Xenopus laevis (African clawed frog)).